We begin with the raw amino-acid sequence, 260 residues long: Putative cysteine-rich repeat secretory protein 23 (260 aa).

An N-terminal signal peptide occupies residues 1-31 (MSSSFVYKSLFLVPILAVVAMQLSFVQSVLS). Gnk2-homologous domains lie at 38–136 (YLHH…NISY) and 142–254 (LPEQ…LYLF).

It belongs to the cysteine-rich repeat secretory protein family.

It is found in the secreted. The chain is Putative cysteine-rich repeat secretory protein 23 (CRRSP23) from Arabidopsis thaliana (Mouse-ear cress).